The primary structure comprises 262 residues: Putative ABC transporter ATP-binding protein SAV_3608 (262 aa).

The region spanning 18 to 248 (LDVAGLAFAY…DTLMRAHRLE (231 aa)) is the ABC transporter domain. 51-58 (GPNGAGKT) is an ATP binding site.

This sequence belongs to the ABC transporter superfamily.

It is found in the cell membrane. Functionally, probably part of an ABC transporter complex. Responsible for energy coupling to the transport system. This Streptomyces avermitilis (strain ATCC 31267 / DSM 46492 / JCM 5070 / NBRC 14893 / NCIMB 12804 / NRRL 8165 / MA-4680) protein is Putative ABC transporter ATP-binding protein SAV_3608.